A 348-amino-acid polypeptide reads, in one-letter code: Acetylesterase (348 aa).

The first 16 residues, 1–16 (MRSILVIPSFVAVLNA), serve as a signal peptide directing secretion. N-linked (GlcNAc...) asparagine glycosylation is found at Asn64, Asn165, Asn218, Asn223, and Asn297.

It belongs to the carbohydrate esterase CE16 family. Post-translationally, N-glycosylated.

The protein resides in the secreted. It carries out the reaction an acetyl ester + H2O = an aliphatic alcohol + acetate + H(+). Its function is as follows. Acetylesterase that acts as an exo-deacetylase. Shows activity towards naphtyl acetate, triacetin, as well as towards glucose- and xylose acetates. Liberates acetic acid from xylo-oligomers. The polypeptide is Acetylesterase (Hypocrea jecorina (Trichoderma reesei)).